Consider the following 290-residue polypeptide: Acetylglutamate kinase (290 aa).

Residues 60–61, Arg-82, and Asn-185 contribute to the substrate site; that span reads GG.

Belongs to the acetylglutamate kinase family. ArgB subfamily.

It localises to the cytoplasm. It carries out the reaction N-acetyl-L-glutamate + ATP = N-acetyl-L-glutamyl 5-phosphate + ADP. The protein operates within amino-acid biosynthesis; L-arginine biosynthesis; N(2)-acetyl-L-ornithine from L-glutamate: step 2/4. Catalyzes the ATP-dependent phosphorylation of N-acetyl-L-glutamate. The polypeptide is Acetylglutamate kinase (Archaeoglobus fulgidus (strain ATCC 49558 / DSM 4304 / JCM 9628 / NBRC 100126 / VC-16)).